Here is a 417-residue protein sequence, read N- to C-terminus: NADH-quinone oxidoreductase subunit D (417 aa).

The protein belongs to the complex I 49 kDa subunit family. NDH-1 is composed of 14 different subunits. Subunits NuoB, C, D, E, F, and G constitute the peripheral sector of the complex.

It is found in the cell inner membrane. It carries out the reaction a quinone + NADH + 5 H(+)(in) = a quinol + NAD(+) + 4 H(+)(out). Its function is as follows. NDH-1 shuttles electrons from NADH, via FMN and iron-sulfur (Fe-S) centers, to quinones in the respiratory chain. The immediate electron acceptor for the enzyme in this species is believed to be ubiquinone. Couples the redox reaction to proton translocation (for every two electrons transferred, four hydrogen ions are translocated across the cytoplasmic membrane), and thus conserves the redox energy in a proton gradient. The polypeptide is NADH-quinone oxidoreductase subunit D (Paraburkholderia phytofirmans (strain DSM 17436 / LMG 22146 / PsJN) (Burkholderia phytofirmans)).